The primary structure comprises 129 residues: Small ribosomal subunit protein uS11 (129 aa).

The protein belongs to the universal ribosomal protein uS11 family. As to quaternary structure, part of the 30S ribosomal subunit. Interacts with proteins S7 and S18. Binds to IF-3.

In terms of biological role, located on the platform of the 30S subunit, it bridges several disparate RNA helices of the 16S rRNA. Forms part of the Shine-Dalgarno cleft in the 70S ribosome. In Bradyrhizobium sp. (strain ORS 278), this protein is Small ribosomal subunit protein uS11.